The primary structure comprises 76 residues: UPF0346 protein LBA0976 (76 aa).

The protein belongs to the UPF0346 family.

The protein is UPF0346 protein LBA0976 of Lactobacillus acidophilus (strain ATCC 700396 / NCK56 / N2 / NCFM).